The sequence spans 325 residues: Aldo-keto reductase family 1 member A1 (325 aa).

An N-acetylalanine modification is found at Ala2. The residue at position 4 (Ser4) is a Phosphoserine. NADP(+)-binding positions include 11–20 (GQKMPLIGLG), Thr21, and Trp22. Ser38 carries the phosphoserine modification. Asp45 serves as a coordination point for NADP(+). The active-site Proton donor is Tyr50. The residue at position 127 (Lys127) is an N6-acetyllysine; alternate. Lys127 is subject to N6-succinyllysine; alternate. Lys145 carries the post-translational modification N6-succinyllysine. NADP(+)-binding residues include Ser162, Asn163, Ser211, Leu213, Ser215, Ser216, Lys263, Ser264, Ile265, Thr266, Arg269, Gln272, and Asn273. At Ser211 the chain carries Phosphoserine.

It belongs to the aldo/keto reductase family.

Its subcellular location is the cytoplasm. The protein localises to the cytosol. It localises to the apical cell membrane. The enzyme catalyses a primary alcohol + NADP(+) = an aldehyde + NADPH + H(+). The catalysed reaction is L-gulonate + NADP(+) = aldehydo-D-glucuronate + NADPH + H(+). It carries out the reaction L-gulono-1,4-lactone + NADP(+) = D-glucurono-3,6-lactone + NADPH + H(+). It catalyses the reaction allyl alcohol + NADP(+) = acrolein + NADPH + H(+). The enzyme catalyses glycerol + NADP(+) = D-glyceraldehyde + NADPH + H(+). The catalysed reaction is glycerol + NADP(+) = L-glyceraldehyde + NADPH + H(+). It carries out the reaction hydroxyacetone + NADP(+) = methylglyoxal + NADPH + H(+). It catalyses the reaction 3-deoxyfructose + NADP(+) = 3-deoxyglucosone + NADPH + H(+). The enzyme catalyses (R)-mevalonate + NADP(+) = (R)-mevaldate + NADPH + H(+). The catalysed reaction is pyridine 3-methanol + NADP(+) = pyridine-3-carbaldehyde + NADPH + H(+). It carries out the reaction S-nitroso-CoA + NADPH + H(+) = sulfinamide-CoA + NADP(+). It catalyses the reaction S-nitrosoglutathione + NADPH + H(+) = S-(hydroxysulfenamide)glutathione + NADP(+). Catalyzes the NADPH-dependent reduction of a wide variety of carbonyl-containing compounds to their corresponding alcohols. Displays enzymatic activity towards endogenous metabolites such as aromatic and aliphatic aldehydes, ketones, monosaccharides and bile acids, with a preference for negatively charged substrates, such as glucuronate and succinic semialdehyde. Functions as a detoxifiying enzyme by reducing a range of toxic aldehydes. Reduces methylglyoxal and 3-deoxyglucosone, which are present at elevated levels under hyperglycemic conditions and are cytotoxic. Involved also in the detoxification of lipid-derived aldehydes like acrolein. Plays a role in the activation of procarcinogens, such as polycyclic aromatic hydrocarbon trans-dihydrodiols, and in the metabolism of various xenobiotics and drugs. Also acts as an inhibitor of protein S-nitrosylation by mediating degradation of S-nitroso-coenzyme A (S-nitroso-CoA), a cofactor required to S-nitrosylate proteins. S-nitroso-CoA reductase activity is involved in reprogramming intermediary metabolism in renal proximal tubules, notably by inhibiting protein S-nitrosylation of isoform 2 of PKM (PKM2). Also acts as a S-nitroso-glutathione reductase by catalyzing the NADPH-dependent reduction of S-nitrosoglutathione. Displays no reductase activity towards retinoids. The protein is Aldo-keto reductase family 1 member A1 (AKR1A1) of Pongo abelii (Sumatran orangutan).